Reading from the N-terminus, the 689-residue chain is Solute carrier organic anion transporter family member 1B2 (689 aa).

Topologically, residues 1–26 are cytoplasmic; the sequence is MDQTQHPSKAAQPLRSEKTRHCDGFR. Residues 27-46 traverse the membrane as a helical segment; it reads IFLAALSFSYICKALGGVIM. At 47 to 65 the chain is on the extracellular side; the sequence is KSSITQIERRFDIPSSISG. A helical transmembrane segment spans residues 66–86; it reads LIDGGFEIGNLLVIVFVSYFG. The Cytoplasmic portion of the chain corresponds to 87–92; it reads SKLHRP. Residues 93 to 117 traverse the membrane as a helical segment; sequence KLIGTGCFIMGIGSILTALPHFFMG. Residues 118–163 lie on the Extracellular side of the membrane; the sequence is YYRYATENDISSLHNSTLTCLVNQTTSLTGTSPEIMEKGCEKGSNS. N-linked (GlcNAc...) asparagine glycosylation is found at N132 and N140. The helical transmembrane segment at 164 to 192 threads the bilayer; the sequence is YTWIYVLMGNMLRGIGETPIVPLGVSYID. Topologically, residues 193–211 are cytoplasmic; sequence DFAKEGNSSMYLGTLHTIA. The helical transmembrane segment at 212–232 threads the bilayer; it reads MIGPILGFIMSSVFAKLYVDV. Topologically, residues 233–250 are extracellular; sequence GYVDLRSVRITPQDARWV. The chain crosses the membrane as a helical span at residues 251–275; that stretch reads GAWWLGFIVNGLLCIICSIPFFFLP. At 276–326 the chain is on the cytoplasmic side; that stretch reads KIPKRSQKERKNSASLHVLKTDEDKNPVTNPTTQEKQAPANLTGFLWSLRS. A phosphoserine mark is found at S288 and S290. A helical membrane pass occupies residues 327–348; sequence ILTNEQYVIFLILTLLQISSFI. Topologically, residues 349–368 are extracellular; it reads GSFTYLFKFIEQQFGQTASQ. Residues 369–392 traverse the membrane as a helical segment; it reads ANFLLGVITIPTMASGMFLGGYLI. Over 393–396 the chain is Cytoplasmic; it reads KRLK. A helical membrane pass occupies residues 397–420; the sequence is LTLLGITKFVFFTTTMAYVFYLSY. Residues 421–533 are Extracellular-facing; the sequence is FLLICENKAF…DKCKTKYYFY (113 aa). A Kazal-like domain is found at 448–505; the sequence is DVPLSYCNSDCICDKNQWEPVCGENGVTYISPCLAGCKSFRGDKKLMNIEFYDCSCVS. Cystine bridges form between C454-C484, C460-C480, and C469-C503. An N-linked (GlcNAc...) asparagine glycan is attached at N513. A helical membrane pass occupies residues 534 to 556; the sequence is ITFQVIISFFTALGSTSLMLILI. The Cytoplasmic segment spans residues 557-565; that stretch reads RSVQPELKS. The helical transmembrane segment at 566-591 threads the bilayer; the sequence is LGMGFHSLVVRTLGGILAPVYYGALI. The Extracellular segment spans residues 592 to 625; sequence DRTCMKWSVTSCGARGACRLYNSRLFGMIYVGLS. A helical transmembrane segment spans residues 626–643; it reads IALKTPILLLYVALIYVM. Over 644-689 the chain is Cytoplasmic; that stretch reads KRKMKRNDNKILENGRKFTDEGNPEPVNNNGYSCVPSDEKNSETPL. Residues 658–689 form a disordered region; the sequence is GRKFTDEGNPEPVNNNGYSCVPSDEKNSETPL. T662 carries the phosphothreonine modification. S680 is subject to Phosphoserine. A compositionally biased stretch (basic and acidic residues) spans 680-689; sequence SDEKNSETPL.

Belongs to the organo anion transporter (TC 2.A.60) family. Liver specific.

The protein resides in the cell membrane. The catalysed reaction is estrone 3-sulfate(out) = estrone 3-sulfate(in). It carries out the reaction taurocholate(out) = taurocholate(in). It catalyses the reaction prostaglandin E2(out) = prostaglandin E2(in). The enzyme catalyses L-thyroxine(out) = L-thyroxine(in). In terms of biological role, mediates the Na(+)-independent uptake of organic anions such as taurochlate, bromosulfophthalein and steroid conjugates (estrone 3-sulfate, 17-beta-glucuronosyl estradiol, dehydroepiandrosterone sulfate). Also transports prostaglandin E2 and L-thyroxine (T4). Shows a pH-sensitive substrate specificity which may be ascribed to the protonation state of the binding site and leads to a stimulation of substrate transport in an acidic microenvironment. Hydrogencarbonate/HCO3(-) acts as the probable counteranion that exchanges for organic anions. This chain is Solute carrier organic anion transporter family member 1B2 (Slco1b2), found in Mus musculus (Mouse).